The following is a 275-amino-acid chain: Bis(5'-nucleosyl)-tetraphosphatase, symmetrical (275 aa).

Belongs to the Ap4A hydrolase family.

It carries out the reaction P(1),P(4)-bis(5'-adenosyl) tetraphosphate + H2O = 2 ADP + 2 H(+). In terms of biological role, hydrolyzes diadenosine 5',5'''-P1,P4-tetraphosphate to yield ADP. The protein is Bis(5'-nucleosyl)-tetraphosphatase, symmetrical (apaH) of Haemophilus influenzae (strain ATCC 51907 / DSM 11121 / KW20 / Rd).